The chain runs to 512 residues: Cytochrome P450 26B1 (512 aa).

Cys-441 contributes to the heme binding site.

Belongs to the cytochrome P450 family. The cofactor is heme. In terms of tissue distribution, highly expressed in brain, particularly in the cerebellum and pons.

It is found in the endoplasmic reticulum membrane. The protein resides in the microsome membrane. The catalysed reaction is all-trans-retinoate + reduced [NADPH--hemoprotein reductase] + O2 = all-trans-4-hydroxyretinoate + oxidized [NADPH--hemoprotein reductase] + H2O + H(+). It catalyses the reaction all-trans-retinoate + reduced [NADPH--hemoprotein reductase] + O2 = all-trans-18-hydroxyretinoate + oxidized [NADPH--hemoprotein reductase] + H2O + H(+). In terms of biological role, a cytochrome P450 monooxygenase involved in the metabolism of retinoates (RAs), the active metabolites of vitamin A, and critical signaling molecules in animals. RAs exist as at least four different isomers: all-trans-RA (atRA), 9-cis-RA, 13-cis-RA, and 9,13-dicis-RA, where atRA is considered to be the biologically active isomer, although 9-cis-RA and 13-cis-RA also have activity. Catalyzes the hydroxylation of atRA primarily at C-4 and C-18, thereby contributing to the regulation of atRA homeostasis and signaling. Hydroxylation of atRA limits its biological activity and initiates a degradative process leading to its eventual elimination. Involved in the convertion of atRA to all-trans-4-oxo-RA. Can oxidize all-trans-13,14-dihydroretinoate (DRA) to metabolites which could include all-trans-4-oxo-DRA, all-trans-4-hydroxy-DRA, all-trans-5,8-epoxy-DRA, and all-trans-18-hydroxy-DRA. Shows preference for the following substrates: atRA &gt; 9-cis-RA &gt; 13-cis-RA. Plays a central role in germ cell development: acts by degrading RAs in the developing testis, preventing STRA8 expression, thereby leading to delay of meiosis. Required for the maintenance of the undifferentiated state of male germ cells during embryonic development in Sertoli cells, inducing arrest in G0 phase of the cell cycle and preventing meiotic entry. Plays a role in skeletal development, both at the level of patterning and in the ossification of bone and the establishment of some synovial joints. Essential for postnatal survival. Its function is as follows. Also has a significant activity in oxidation of tazarotenic acid and may therefore metabolize that xenobiotic in vivo. This Homo sapiens (Human) protein is Cytochrome P450 26B1 (CYP26B1).